Here is a 232-residue protein sequence, read N- to C-terminus: NAD(P)H-quinone oxidoreductase subunit K 1 (232 aa).

Residues Cys-49, Cys-50, Cys-114, and Cys-145 each coordinate [4Fe-4S] cluster.

Belongs to the complex I 20 kDa subunit family. In terms of assembly, NDH-1 can be composed of about 15 different subunits; different subcomplexes with different compositions have been identified which probably have different functions. [4Fe-4S] cluster serves as cofactor.

Its subcellular location is the cellular thylakoid membrane. It catalyses the reaction a plastoquinone + NADH + (n+1) H(+)(in) = a plastoquinol + NAD(+) + n H(+)(out). The catalysed reaction is a plastoquinone + NADPH + (n+1) H(+)(in) = a plastoquinol + NADP(+) + n H(+)(out). In terms of biological role, NDH-1 shuttles electrons from an unknown electron donor, via FMN and iron-sulfur (Fe-S) centers, to quinones in the respiratory and/or the photosynthetic chain. The immediate electron acceptor for the enzyme in this species is believed to be plastoquinone. Couples the redox reaction to proton translocation, and thus conserves the redox energy in a proton gradient. Cyanobacterial NDH-1 also plays a role in inorganic carbon-concentration. This Acaryochloris marina (strain MBIC 11017) protein is NAD(P)H-quinone oxidoreductase subunit K 1.